Here is a 324-residue protein sequence, read N- to C-terminus: MTKSIFEYKDDQDWYLASFGSYNHLTCFGDDEAYEQYVDFFQGLTSTLDVSGFQLHVVKHSSDLRLVSFILDCLKEELGRDLVVTQHQGTLLVSEGDKLLYVHVPREGVSLDDFFGSDNKSDFGDVLLIATRNEGKTKEFRKLFGKLGIKVENLNDYPDLPEVAETGMTFEENARLKAETISKLTGKMVLSDDSGLQVDVLGGLPGVWSARFAGPEATDAENNAKLLHELAMVLDDSKRSAQFHTTLVVAAPGRDSLVVDADWKGYIGREPKGDNGFGYDPLFLVGNTGRTAAELSTEEKNEQSHRGQAVKKLMEVFPAWQNKQ.

Residues 1–126 (MTKSIFEYKD…SDNKSDFGDV (126 aa)) are unknown. An NTP pyrophosphatase region spans residues 127-324 (LLIATRNEGK…EVFPAWQNKQ (198 aa)). 131–136 (TRNEGK) is a binding site for substrate. Asp193 (proton acceptor) is an active-site residue. Asp193 contacts Mg(2+). Substrate contacts are provided by residues Ser194, 277-280 (FGYD), Lys300, and 305-306 (HR).

Belongs to the HAM1 NTPase family. As to quaternary structure, homodimer. Requires Mg(2+) as cofactor.

It carries out the reaction XTP + H2O = XMP + diphosphate + H(+). The catalysed reaction is dITP + H2O = dIMP + diphosphate + H(+). It catalyses the reaction ITP + H2O = IMP + diphosphate + H(+). Pyrophosphatase that catalyzes the hydrolysis of nucleoside triphosphates to their monophosphate derivatives, with a high preference for the non-canonical purine nucleotides XTP (xanthosine triphosphate), dITP (deoxyinosine triphosphate) and ITP. Seems to function as a house-cleaning enzyme that removes non-canonical purine nucleotides from the nucleotide pool, thus preventing their incorporation into DNA/RNA and avoiding chromosomal lesions. The protein is dITP/XTP pyrophosphatase of Streptococcus thermophilus (strain ATCC BAA-250 / LMG 18311).